Reading from the N-terminus, the 820-residue chain is Trimethylamine-N-oxide reductase (820 aa).

Positions 1–33 (MAITRRSFLKGVATTSAASVIGPSLLASASANA) form a signal peptide, tat-type signal. A Mo-bis(molybdopterin guanine dinucleotide)-binding site is contributed by Ser179.

This sequence belongs to the prokaryotic molybdopterin-containing oxidoreductase family. It depends on Mo-bis(molybdopterin guanine dinucleotide) as a cofactor. Predicted to be exported by the Tat system. The position of the signal peptide cleavage has not been experimentally proven.

It localises to the periplasm. It catalyses the reaction trimethylamine + 2 Fe(III)-[cytochrome c] + H2O = trimethylamine N-oxide + 2 Fe(II)-[cytochrome c] + 3 H(+). In terms of biological role, reduces trimethylamine-N-oxide (TMAO) into trimethylamine; an anaerobic reaction coupled to energy-yielding reactions. This chain is Trimethylamine-N-oxide reductase (torA), found in Vibrio parahaemolyticus serotype O3:K6 (strain RIMD 2210633).